We begin with the raw amino-acid sequence, 101 residues long: Large ribosomal subunit protein uL23 (101 aa).

This sequence belongs to the universal ribosomal protein uL23 family. In terms of assembly, part of the 50S ribosomal subunit. Contacts protein L29, and trigger factor when it is bound to the ribosome.

Functionally, one of the early assembly proteins it binds 23S rRNA. One of the proteins that surrounds the polypeptide exit tunnel on the outside of the ribosome. Forms the main docking site for trigger factor binding to the ribosome. In Corynebacterium diphtheriae (strain ATCC 700971 / NCTC 13129 / Biotype gravis), this protein is Large ribosomal subunit protein uL23.